Consider the following 179-residue polypeptide: Ribosome maturation factor RimM (179 aa).

A PRC barrel domain is found at 95–174; the sequence is KDEFFYFDIL…QIFCTQDAFL (80 aa).

The protein belongs to the RimM family. Binds ribosomal protein uS19.

The protein localises to the cytoplasm. Its function is as follows. An accessory protein needed during the final step in the assembly of 30S ribosomal subunit, possibly for assembly of the head region. Essential for efficient processing of 16S rRNA. May be needed both before and after RbfA during the maturation of 16S rRNA. It has affinity for free ribosomal 30S subunits but not for 70S ribosomes. The sequence is that of Ribosome maturation factor RimM from Campylobacter jejuni subsp. jejuni serotype O:2 (strain ATCC 700819 / NCTC 11168).